A 980-amino-acid chain; its full sequence is Glutamate receptor ionotropic, kainate 5 (980 aa).

The N-terminal stretch at 1-14 (MPAELLLLLIVAFA) is a signal peptide. Residues 15–544 (SPSCQVLSSL…YFSFLDPFSP (530 aa)) are Extracellular-facing. Cystine bridges form between cysteine 36/cysteine 292, cysteine 83/cysteine 334, and cysteine 165/cysteine 170. N-linked (GlcNAc...) asparagine glycans are attached at residues asparagine 219, asparagine 271, asparagine 285, asparagine 322, asparagine 372, asparagine 394, asparagine 400, asparagine 407, asparagine 414, and asparagine 478. The helical transmembrane segment at 545 to 565 (AVWLFMLLAYLAVSCVLFLAA) threads the bilayer. At 566-622 (RLSPYEWYNPHPCLRARPHILENQYTLGNSLWFPVGGFMQQGSEIMPRALSTRCVSG) the chain is on the cytoplasmic side. The chain crosses the membrane as a helical span at residues 623-643 (VWWAFTLIIISSYTANLAAFL). Over 644-803 (TVQRMEVPVE…HRAKGLGMEN (160 aa)) the chain is Extracellular. N-linked (GlcNAc...) asparagine glycosylation is present at asparagine 735. Residues 804 to 824 (IGGIFIVLICGLIIAVFVAVM) form a helical membrane-spanning segment. Residues 825-980 (EFIWSTRRSA…AGPRELAEHE (156 aa)) lie on the Cytoplasmic side of the membrane. Disordered regions lie at residues 891–927 (YSAGAGGDAGSAHGGPQRLLDDPGPPSGARPAAPTPC) and 944–980 (ASGAGAPPRGLGVPAEATSPPRPRPGPAGPRELAEHE). Over residues 894–903 (GAGGDAGSAH) the composition is skewed to gly residues.

The protein belongs to the glutamate-gated ion channel (TC 1.A.10.1) family. GRIK5 subfamily. Homotetramer. Heterotetramer with GRIK2. Can form functional heteromeric receptors with GRIK1 and GRIK2. Can form functional heteromeric receptors with GRIK3.

The protein resides in the cell membrane. It localises to the postsynaptic cell membrane. The protein localises to the presynaptic cell membrane. Its function is as follows. Ionotropic glutamate receptor that functions as a cation-permeable ligand-gated ion channel, gated by L-glutamate and the glutamatergic agonist kainic acid. Cannot form functional channels on its own and produces channel activity only in heteromeric assembly with GRIK1 and GRIK2 subunits. Can form functional heteromeric receptors with GRIK3. This Homo sapiens (Human) protein is Glutamate receptor ionotropic, kainate 5 (GRIK5).